The primary structure comprises 227 residues: RNA-free ribonuclease P (227 aa).

Belongs to the HARP family.

It catalyses the reaction Endonucleolytic cleavage of RNA, removing 5'-extranucleotides from tRNA precursor.. RNA-free RNase P that catalyzes the removal of the 5'-leader sequence from pre-tRNA to produce the mature 5'-terminus. The polypeptide is RNA-free ribonuclease P (Archaeoglobus fulgidus (strain ATCC 49558 / DSM 4304 / JCM 9628 / NBRC 100126 / VC-16)).